A 451-amino-acid chain; its full sequence is uncharacterized protein (451 aa).

An FAD-binding PCMH-type domain is found at 29-204; the sequence is LERYPDIIVF…TSMTFKAVPI (176 aa). Histidine 66 is modified (pros-8alpha-FAD histidine).

It belongs to the oxygen-dependent FAD-linked oxidoreductase family. The cofactor is FAD.

This is an uncharacterized protein from Bacillus subtilis (strain 168).